Reading from the N-terminus, the 86-residue chain is Alpha-toxin TbTx5 (86 aa).

An N-terminal signal peptide occupies residues 1–19 (MNDFVFLVVACLLTAGTEG). The 62-residue stretch at 21–82 (KDGYPVEGDN…EPTKTNGRCK (62 aa)) folds into the LCN-type CS-alpha/beta domain. 4 disulfides stabilise this stretch: cysteine 31-cysteine 81, cysteine 35-cysteine 57, cysteine 43-cysteine 64, and cysteine 47-cysteine 66. Position 83 is a proline amide (proline 83).

This sequence belongs to the long (4 C-C) scorpion toxin superfamily. Sodium channel inhibitor family. Alpha subfamily. In terms of tissue distribution, expressed by the venom gland.

Its subcellular location is the secreted. In terms of biological role, alpha toxins bind voltage-independently at site-3 of sodium channels (Nav) and inhibit the inactivation of the activated channels, thereby blocking neuronal transmission. The protein is Alpha-toxin TbTx5 of Tityus bahiensis (Brazilian scorpion).